The chain runs to 454 residues: Trigger factor (454 aa).

Positions 169-261 (GDVAIADYEG…LKELKSRELP (93 aa)) constitute a PPIase FKBP-type domain.

This sequence belongs to the FKBP-type PPIase family. Tig subfamily.

It localises to the cytoplasm. It catalyses the reaction [protein]-peptidylproline (omega=180) = [protein]-peptidylproline (omega=0). In terms of biological role, involved in protein export. Acts as a chaperone by maintaining the newly synthesized protein in an open conformation. Functions as a peptidyl-prolyl cis-trans isomerase. The sequence is that of Trigger factor from Picosynechococcus sp. (strain ATCC 27264 / PCC 7002 / PR-6) (Agmenellum quadruplicatum).